A 189-amino-acid chain; its full sequence is Chitin synthase 1 (189 aa).

The protein belongs to the chitin synthase family.

The protein resides in the cell membrane. It catalyses the reaction [(1-&gt;4)-N-acetyl-beta-D-glucosaminyl](n) + UDP-N-acetyl-alpha-D-glucosamine = [(1-&gt;4)-N-acetyl-beta-D-glucosaminyl](n+1) + UDP + H(+). Functionally, polymerizes chitin, a structural polymer of the cell wall and septum, by transferring the sugar moiety of UDP-GlcNAc to the non-reducing end of the growing chitin polymer. In Exophiala exophialae (Black yeast-like fungus), this protein is Chitin synthase 1 (CHS1).